A 570-amino-acid polypeptide reads, in one-letter code: Periplasmic trehalase (570 aa).

The first 34 residues, 1–34 (MIPPEIRRSVLLQKAIKLALAGTLLTFASFSATA), serve as a signal peptide directing secretion. Substrate is bound by residues arginine 159, 166-167 (WD), asparagine 203, 212-214 (HSQ), 284-286 (RPE), and glycine 317. Residues aspartate 319 and glutamate 503 each act as proton donor/acceptor in the active site. Glutamate 518 is a substrate binding site. The interval 544-570 (KPCDSVPSTRPASLSATPTKTPSAATQ) is disordered. Residues 554–570 (PASLSATPTKTPSAATQ) show a composition bias toward low complexity.

This sequence belongs to the glycosyl hydrolase 37 family. Monomer.

It is found in the periplasm. The enzyme catalyses alpha,alpha-trehalose + H2O = alpha-D-glucose + beta-D-glucose. Its function is as follows. Provides the cells with the ability to utilize trehalose at high osmolarity by splitting it into glucose molecules that can subsequently be taken up by the phosphotransferase-mediated uptake system. The polypeptide is Periplasmic trehalase (Salmonella paratyphi C (strain RKS4594)).